The sequence spans 509 residues: Cobyric acid synthase (509 aa).

Residues 262 to 459 (EIKVGIIKLP…IHGIFENDNW (198 aa)) form the GATase cobBQ-type domain. The active-site Nucleophile is the C343. The active site involves H451.

It belongs to the CobB/CobQ family. CobQ subfamily.

Its pathway is cofactor biosynthesis; adenosylcobalamin biosynthesis. Catalyzes amidations at positions B, D, E, and G on adenosylcobyrinic A,C-diamide. NH(2) groups are provided by glutamine, and one molecule of ATP is hydrogenolyzed for each amidation. This chain is Cobyric acid synthase, found in Prochlorococcus marinus (strain AS9601).